The primary structure comprises 581 residues: 2-succinyl-5-enolpyruvyl-6-hydroxy-3-cyclohexene-1-carboxylate synthase (581 aa).

Belongs to the TPP enzyme family. MenD subfamily. In terms of assembly, homodimer. Mg(2+) is required as a cofactor. The cofactor is Mn(2+). Requires thiamine diphosphate as cofactor.

The catalysed reaction is isochorismate + 2-oxoglutarate + H(+) = 5-enolpyruvoyl-6-hydroxy-2-succinyl-cyclohex-3-ene-1-carboxylate + CO2. Its pathway is quinol/quinone metabolism; 1,4-dihydroxy-2-naphthoate biosynthesis; 1,4-dihydroxy-2-naphthoate from chorismate: step 2/7. The protein operates within quinol/quinone metabolism; menaquinone biosynthesis. Its function is as follows. Catalyzes the thiamine diphosphate-dependent decarboxylation of 2-oxoglutarate and the subsequent addition of the resulting succinic semialdehyde-thiamine pyrophosphate anion to isochorismate to yield 2-succinyl-5-enolpyruvyl-6-hydroxy-3-cyclohexene-1-carboxylate (SEPHCHC). The chain is 2-succinyl-5-enolpyruvyl-6-hydroxy-3-cyclohexene-1-carboxylate synthase from Chlorobium phaeobacteroides (strain BS1).